Consider the following 376-residue polypeptide: Nuclear egress protein 1 (376 aa).

Position 19 is a phosphoserine (S19). The disordered stretch occupies residues 22–57 (RKRRQRELASKVASTVNGATSANNHGEPPSPADARP). The segment covering 33–45 (VASTVNGATSANN) has biased composition (polar residues). Residues 106 to 211 (CLDISPYGNE…HVIFENSDVH (106 aa)) form a CCCH-type zinc finger. A disordered region spans residues 316 to 376 (VVSTNGCGPS…PLFLNSIRAP (61 aa)). Residues 317-332 (VSTNGCGPSSSSQSTP) are compositionally biased toward polar residues.

The protein belongs to the herpesviridae NEC1 protein family. As to quaternary structure, forms a heterohexameric complex with NEC2. Interacts with capsid vertex specific component 2/CVC2; this interaction directs the capsid to the host inner nuclear membrane to initiate budding. In terms of processing, phosphorylated at serine residues in the N-terminus. This phosphorylation regulates the localization within the inner nuclear membrane. Phosphorylation by viral kinase UL97 at Ser-19 plays an important role for correct viral nuclear egress complex (NEC) localization.

It is found in the host nucleus inner membrane. In terms of biological role, plays an essential role in virion nuclear egress, the first step of virion release from infected cell. Within the host nucleus, NEC1 interacts with the newly formed capsid through the vertexes and directs it to the inner nuclear membrane by associating with NEC2. Induces the budding of the capsid at the inner nuclear membrane as well as its envelopment into the perinuclear space. There, the NEC1/NEC2 complex promotes the fusion of the enveloped capsid with the outer nuclear membrane and the subsequent release of the viral capsid into the cytoplasm where it will reach the secondary budding sites in the host Golgi or trans-Golgi network. The sequence is that of Nuclear egress protein 1 from Homo sapiens (Human).